Here is a 113-residue protein sequence, read N- to C-terminus: Ig heavy chain V-III region A4 (113 aa).

The 113-residue stretch at 1-113 (EVKLEESGGG…YWGQGTLVTV (113 aa)) folds into the Ig-like domain. Cys-22 and Cys-98 form a disulfide bridge.

The polypeptide is Ig heavy chain V-III region A4 (Mus musculus (Mouse)).